Consider the following 821-residue polypeptide: Kinetochore protein SLK19 (821 aa).

2 disordered regions span residues Met1–Val52 and Phe99–Glu153. Position 7 is a phosphothreonine; by CDC28 (Thr7). A compositionally biased stretch (polar residues) spans Gln15–Phe51. Basic and acidic residues-rich tracts occupy residues Phe99 to Val122 and Ser136 to Glu153. 2 positions are modified to phosphoserine: Ser188 and Ser189. Ser201 carries the phosphoserine; by CDC28 modification. Ser216 is modified (phosphoserine). Phosphothreonine is present on Thr273. Disordered regions lie at residues Pro274–Gln298 and Glu699–Glu720. Ser283 is subject to Phosphoserine. A coiled-coil region spans residues Ala310–Lys821.

Post-translationally, cleaved by ESP1 at the onset of anaphase. Phosphorylated by CDC5/Polo-like kinase at the onset of anaphase. Phosphorylation takes places at proximity to cleavage sites and is required for an efficient cleavage by ESP1. Phosphorylated also by CDC28.

It localises to the chromosome. The protein localises to the centromere. It is found in the kinetochore. Its subcellular location is the cytoplasm. The protein resides in the cytoskeleton. It localises to the microtubule organizing center. The protein localises to the spindle pole body. In terms of biological role, has a role in spindle assembly and stability. Required to ensure a timely exit form mitosis. Essential to maintain pre-anaphase spindle polarity. Associates to the plus ends of the microtubules at the kinetochore and spindle midzone. A component of the FEAR (CDC14 Early Anaphase Release) network which promotes CDC14 release from the nucleolus during early anaphase. Required for proper chromosome segregation during meiosis I where it prevents premature sister chromatid separation. The protein is Kinetochore protein SLK19 (SLK19) of Saccharomyces cerevisiae (strain ATCC 204508 / S288c) (Baker's yeast).